A 269-amino-acid polypeptide reads, in one-letter code: Gap junction gamma-3 protein (269 aa).

Topologically, residues 1–33 are extracellular; that stretch reads MLLLELPIKCRMCGRFLRQLLAQESQHSTPVGR. Residues 34–54 form a helical membrane-spanning segment; it reads FLLPMLMGFRLLILVSSGPGV. The Cytoplasmic segment spans residues 55 to 86; it reads FGNDENEFICHLGQPGCKTICYDVFRPLSPLR. The chain crosses the membrane as a helical span at residues 87–107; sequence FWAFQVILMAVPSAIYVAFTL. The Extracellular portion of the chain corresponds to 108 to 145; that stretch reads YHVIGYWEVPGKENKEQETQISKGDHSKDVSGAKSLKL. A helical transmembrane segment spans residues 146–166; that stretch reads LWAYVAHLGVRLALEGAALGV. The Cytoplasmic portion of the chain corresponds to 167 to 205; it reads QYNLYGFKMSSTFICREDPCIGSTTCFQSHPSEKTIFLN. The chain crosses the membrane as a helical span at residues 206–226; the sequence is IMFGISGACFLFIFLELALLG. The Extracellular segment spans residues 227 to 269; that stretch reads LGRFWRIYKHKLSFLKKLPTSESSVRSKDTTDELSVVEAKEPF. Ser261 is subject to Phosphoserine.

This sequence belongs to the connexin family. Gamma-type subfamily. A connexon is composed of a hexamer of connexins. As to expression, CNS specific. Expression is restricted to brain, spinal cord, and sciatic nerve.

It localises to the cell membrane. Its subcellular location is the cell junction. The protein localises to the gap junction. Functionally, one gap junction consists of a cluster of closely packed pairs of transmembrane channels, the connexons, through which materials of low MW diffuse from one cell to a neighboring cell. This is Gap junction gamma-3 protein (Gjc3) from Mus musculus (Mouse).